The sequence spans 403 residues: Serine/threonine-protein phosphatase 4 regulatory subunit 2-A (403 aa).

3 stretches are compositionally biased toward polar residues: residues 140–149 (EKNNSTSLNR), 156–170 (PSNS…NVNG), and 183–196 (SLSS…LPDS). A disordered region spans residues 140–403 (EKNNSTSLNR…DAPEEPMEQD (264 aa)). A compositionally biased stretch (basic and acidic residues) spans 197 to 211 (TENKESDLQQKEKSQ). 2 stretches are compositionally biased toward polar residues: residues 212–226 (SDSA…ATTS) and 371–387 (ATSS…SPME). A compositionally biased stretch (acidic residues) spans 388–403 (NSEEATDAPEEPMEQD).

The protein belongs to the PPP4R2 family. In terms of assembly, serine/threonine-protein phosphatase 4 (PP4) occurs in different assemblies of the catalytic and one or more regulatory subunits.

Functionally, regulatory subunit of serine/threonine-protein phosphatase 4 (PP4). The sequence is that of Serine/threonine-protein phosphatase 4 regulatory subunit 2-A (ppp4r2-a) from Xenopus laevis (African clawed frog).